The chain runs to 372 residues: F-box/kelch-repeat protein At4g14905 (372 aa).

The F-box domain maps to leucine 34–arginine 74. Kelch repeat units follow at residues glutamate 137–glycine 183, lysine 184–methionine 229, and lysine 232–glutamine 280.

This chain is F-box/kelch-repeat protein At4g14905, found in Arabidopsis thaliana (Mouse-ear cress).